Here is a 572-residue protein sequence, read N- to C-terminus: Delta-1-pyrroline-5-carboxylate dehydrogenase, mitochondrial (572 aa).

Residue 300–305 participates in NAD(+) binding; it reads GQISTR. Glu320 acts as the Proton acceptor in catalysis. Catalysis depends on Cys354, which acts as the Nucleophile.

The protein belongs to the aldehyde dehydrogenase family.

It localises to the mitochondrion matrix. It carries out the reaction L-glutamate 5-semialdehyde + NAD(+) + H2O = L-glutamate + NADH + 2 H(+). The protein operates within amino-acid degradation; L-proline degradation into L-glutamate; L-glutamate from L-proline: step 2/2. This Emericella nidulans (strain FGSC A4 / ATCC 38163 / CBS 112.46 / NRRL 194 / M139) (Aspergillus nidulans) protein is Delta-1-pyrroline-5-carboxylate dehydrogenase, mitochondrial (prnC).